A 227-amino-acid polypeptide reads, in one-letter code: [D-Ala2]-deltorphins (227 aa).

An N-terminal signal peptide occupies residues 1–20 (MSFLKKSLLLVLFLGLVSHS). A propeptide spanning residues 21–46 (VCKEEKRETEEENENEEENHEVGSEM) is cleaved from the precursor. A disordered region spans residues 22-227 (CKEEKRETEE…DVVGGEAKKM (206 aa)). Residues 30 to 39 (EEENENEEEN) show a composition bias toward acidic residues. Position 50 is a D-alanine (Ala) (Ala-50). A propeptide spanning residues 57 to 75 (DTEEKNENEEENQEEGSEM) is cleaved from the precursor. The segment covering 62-72 (NENEEENQEEG) has biased composition (acidic residues). Residues 73-87 (SEMKRYAFGYPKREP) are compositionally biased toward basic and acidic residues. Ala-79 carries the post-translational modification D-alanine (Ala). The propeptide occupies 86-104 (EPEEENENEEENHEEGSEM). A compositionally biased stretch (acidic residues) spans 88–98 (EEENENEEENH). Positions 99–108 (EEGSEMKRYA) are enriched in basic and acidic residues. Ala-108 carries the D-alanine (Ala) modification. The residue at position 113 (Gly-113) is a Glycine amide. A propeptide spanning residues 115–140 (EAKKMKREPEEENENEEENHEEGSEM) is cleaved from the precursor. A compositionally biased stretch (acidic residues) spans 124-134 (EEENENEEENH). Residues 135–144 (EEGSEMKRYA) show a composition bias toward basic and acidic residues. A D-alanine (Ala) modification is found at Ala-144. Gly-149 carries the glycine amide modification. Positions 151–176 (EAKKMKREPEEENENEEENHEEGSEM) are excised as a propeptide. Over residues 160–170 (EEENENEEENH) the composition is skewed to acidic residues. Basic and acidic residues predominate over residues 171 to 180 (EEGSEMKRYA). A D-alanine (Ala) modification is found at Ala-180. Gly-185 is subject to Glycine amide. Positions 187–212 (EAKKMKREPEEENENEEENHEEGSEM) are excised as a propeptide. A compositionally biased stretch (acidic residues) spans 196–206 (EEENENEEENH). Over residues 207–216 (EEGSEMKRYA) the composition is skewed to basic and acidic residues. Residue Ala-216 is modified to D-alanine (Ala). Gly-221 carries the glycine amide modification. A propeptide spanning residues 223–227 (EAKKM) is cleaved from the precursor.

The protein belongs to the frog skin active peptide (FSAP) family. Dermorphin subfamily. In terms of tissue distribution, expressed by the skin glands.

The protein resides in the secreted. Functionally, deltorphin is a heptapeptide with a very potent opiate-like activity. Has high affinity and selectivity for delta-type opioid receptors. The two dermorphin-like peptides have a similar affinity and selectivity for the mu opioid receptor as dermorphin. In Phyllomedusa bicolor (Two-colored leaf frog), this protein is [D-Ala2]-deltorphins.